The primary structure comprises 487 residues: WD repeat, SAM and U-box domain-containing protein 1 (487 aa).

WD repeat units lie at residues 10 to 47, 52 to 93, 95 to 134, 137 to 176, 179 to 227, 237 to 276, and 279 to 318; these read SHRD…ELPF, GHGY…AVLE, PGRS…LRRT, VNDT…LHAE, AHDL…SAGI, GQSA…LLYT, and QHDR…SAQG. An SAM domain is found at 347–411; sequence WSEEEVLAWL…MKKIEELKMV (65 aa). The region spanning 416 to 487 is the U-box domain; that stretch reads GTPDEFLCPI…MAIFRWSTSQ (72 aa).

The chain is WD repeat, SAM and U-box domain-containing protein 1 (wdsub1) from Danio rerio (Zebrafish).